Reading from the N-terminus, the 607-residue chain is MSSFRSHTSGELRKSHVGETVRLAGWVHRKRDHGGLLFIDLRDNYGLTQLVFDPDRAEAFALAEKLRAEYVVAIEGKVVARSAETINANLPTGDIEIAVSSMEVLSEAQDLPLPVFGEPDYPEDIRLTYRFLDLRRETLHRNILLRSKIIADIRRRMTEVGFNEFQTPILTASSPEGARDFLVPSRMHPGKFYALPQAPQQFKQLIMVAGFDRYFQIAPCFRDEDARADRSPGEFYQLDVEMSFVTQDDVFAAIEPVLHGLFEKFAEGKKVSSYPFTRIPYAEAIRKYGSDKPDLRNPIVMESVTDHFRGSGFKVFAGLIEKDSKVEVWAIPAPGGGNRAFCDRMNSWAQGEGQPGLGYIFFREEGGALEGAGPVAKNIGPERTEAIRTQLGLKAGDAVFFVAGVPAKTASFAGLARTRVGTELGLIEEDIFKFCWIVDFPMFEWNEDEKKIDFSHNPFSMPNYPLDKFLKLDKDNADEILGMTAFQYDIVCNGVELSSGAIRNHKPDVMYKAFEIAGYDKSVVETKFGGMLNAFKYGAPPHGGLAPGIDRMVMLLAGVENLREVTMFPMNQQAQDLLMQAPSEVEPKQLKELHIRVVPPLEKKKEG.

L-aspartate is bound at residue E176. Positions 200–203 (QQFK) are aspartate. L-aspartate contacts are provided by R222 and H456. 222 to 224 (RDE) serves as a coordination point for ATP. E496 serves as a coordination point for ATP. R503 serves as a coordination point for L-aspartate. Residue 548-551 (GIDR) participates in ATP binding.

It belongs to the class-II aminoacyl-tRNA synthetase family. Type 1 subfamily. Homodimer.

Its subcellular location is the cytoplasm. It catalyses the reaction tRNA(Asx) + L-aspartate + ATP = L-aspartyl-tRNA(Asx) + AMP + diphosphate. Functionally, aspartyl-tRNA synthetase with relaxed tRNA specificity since it is able to aspartylate not only its cognate tRNA(Asp) but also tRNA(Asn). Reaction proceeds in two steps: L-aspartate is first activated by ATP to form Asp-AMP and then transferred to the acceptor end of tRNA(Asp/Asn). The polypeptide is Aspartate--tRNA(Asp/Asn) ligase (Parvibaculum lavamentivorans (strain DS-1 / DSM 13023 / NCIMB 13966)).